The following is a 113-amino-acid chain: Iron-sulfur cluster insertion protein ErpA (113 aa).

Iron-sulfur cluster-binding residues include C41, C105, and C107.

Belongs to the HesB/IscA family. As to quaternary structure, homodimer. It depends on iron-sulfur cluster as a cofactor.

In terms of biological role, required for insertion of 4Fe-4S clusters for at least IspG. This is Iron-sulfur cluster insertion protein ErpA from Actinobacillus pleuropneumoniae serotype 7 (strain AP76).